Consider the following 883-residue polypeptide: Pyruvate, phosphate dikinase 2 (883 aa).

The interval 1–21 (MAPAPCGRSSQRVFHFGKGKS) is disordered. His-465 functions as the Tele-phosphohistidine intermediate in the catalytic mechanism. Substrate is bound by residues Arg-571, Arg-628, Glu-757, Gly-778, Thr-779, Asn-780, and Asp-781. Residue Glu-757 participates in Mg(2+) binding. A Mg(2+)-binding site is contributed by Asp-781. The active-site Proton donor is Cys-843.

The protein belongs to the PEP-utilizing enzyme family. Mg(2+) is required as a cofactor. As to expression, expressed in leaves, roots and stems.

The protein localises to the cytoplasm. It catalyses the reaction pyruvate + phosphate + ATP = phosphoenolpyruvate + AMP + diphosphate + H(+). In terms of biological role, formation of phosphoenolpyruvate, which is the primary acceptor of CO(2) in C4 and some Crassulacean acid metabolism plants. The polypeptide is Pyruvate, phosphate dikinase 2 (Zea mays (Maize)).